A 434-amino-acid polypeptide reads, in one-letter code: Septin-6 (434 aa).

An N-acetylalanine modification is found at alanine 2. Serine 27 carries the post-translational modification Phosphoserine. Residues 39 to 305 (QGFCFNILCV…ELYRRCKLEE (267 aa)) form the Septin-type G domain. The tract at residues 49 to 56 (GETGLGKS) is G1 motif. GTP-binding positions include 49-56 (GETGLGKS), glycine 104, 185-193 (KADAISKSE), glycine 239, and arginine 254. Positions 101 to 104 (STVG) are G3 motif. The G4 motif stretch occupies residues 184–187 (AKAD). Residues 321 to 409 (QETYEAKRNE…KTAAELLQSQ (89 aa)) adopt a coiled-coil conformation. Lysine 367 carries the post-translational modification N6-acetyllysine. The interval 405–434 (LLQSQGSQAGGSQTLKRDKEKKNNPWLCTE) is disordered. Low complexity predominate over residues 407–417 (QSQGSQAGGSQ). At serine 416 the chain carries Phosphoserine. Threonine 418 bears the Phosphothreonine mark.

It belongs to the TRAFAC class TrmE-Era-EngA-EngB-Septin-like GTPase superfamily. Septin GTPase family. Septins polymerize into heterooligomeric protein complexes that form filaments, and associate with cellular membranes, actin filaments and microtubules. GTPase activity is required for filament formation. Filaments are assembled from asymmetrical heterotrimers, composed of SEPTIN2, SEPTIN6 and SEPTIN7 that associate head-to-head to form a hexameric unit. Within the trimer, directly interacts with SEPTIN2 and SEPTIN7. Also interacts with SEPTIN9 and SEPTIN12. Interaction with SEPTIN12 alters filament structure. Component of a septin core octameric complex consisting of SEPTIN12, SEPTIN7, SEPTIN6 and SEPTIN2 or SEPTIN4 in the order 12-7-6-2-2-6-7-12 or 12-7-6-4-4-6-7-12 and located in the sperm annulus. Interacts with SOCS7. Interacts with HNRNPA1. As to quaternary structure, (Microbial infection) Interacts with HCV NS5B. As to expression, widely expressed.

The protein localises to the cytoplasm. It is found in the cytoskeleton. The protein resides in the spindle. Its subcellular location is the chromosome. It localises to the centromere. The protein localises to the kinetochore. It is found in the cleavage furrow. The protein resides in the midbody. Its subcellular location is the cell projection. It localises to the cilium. The protein localises to the flagellum. Functionally, filament-forming cytoskeletal GTPase. Required for normal organization of the actin cytoskeleton. Involved in cytokinesis. May play a role in HCV RNA replication. Forms a filamentous structure with SEPTIN12, SEPTIN6, SEPTIN2 and probably SEPTIN4 at the sperm annulus which is required for the structural integrity and motility of the sperm tail during postmeiotic differentiation. This Homo sapiens (Human) protein is Septin-6.